A 426-amino-acid chain; its full sequence is MDENIIINILRKEMMPGLGVTEPASIALSSAKAYEVIGGEIKNIKIIADPGLFKNAFSCAIPGTKEVGNEMAALLGTICGDASLGLECLRKIKKEDVSKAKTMLDKIDIEIKSQTEGLYVESIVTTNNGIGRTIIRYKHDNIVLVEKNNKILYQKENNLNKSNNFSQEAIDSKKITEMKLDEIVEFVNNVNYEKIEFLLESIKMNKKLSEKGLEGLGIGLGKLILESCNENNYELYAEALTCSAIDARVSGAPVPAMTVTGSGNHGIITTLPLLAIKEKKNLNNEVLARSIALSYIINIYIKEFSGKLSAFCGCAVAAGTGVSAGICYLLGGSLKEIENTIKNMASNITGMICTGGNLACSLKANTGVKAAFLSAKMALNNIVIPNKCGIVSNSIEDTMKNIGRIAYPGMMETDKEILNIMIESSK.

This sequence belongs to the UPF0597 family.

The protein is UPF0597 protein CLB_1750 of Clostridium botulinum (strain ATCC 19397 / Type A).